The chain runs to 345 residues: Histone H3-like centromeric protein cpar-1 (345 aa).

Residues Asn-117 to Lys-246 form a disordered region. Over residues Lys-122 to Asp-149 the composition is skewed to basic and acidic residues. The span at Arg-233–Lys-246 shows a compositional bias: basic residues. Residues Ser-263–Cys-340 are H3-like.

The protein belongs to the histone H3 family. As to quaternary structure, forms a nucleosome-like histone octamer containing two molecules each of H2A, H2B, cpar-1 and H4 assembled in one cpar-1-H4 heterotetramer and two H2A-H2B heterodimers. Post-translationally, cleaved at the onset of meiotic anaphase I, likely by separase sep-1.

The protein resides in the nucleus. It is found in the chromosome. Its function is as follows. Histone H3-like variant which exclusively replaces conventional H3 in the nucleosome core of centromeric chromatin at the inner plate of the kinetochore. Required for recruitment and assembly of kinetochore proteins, mitotic progression and chromosome segregation. May serve as an epigenetic mark that propagates centromere identity through replication and cell division. Not required for chromosome segregation during meiosis. This is Histone H3-like centromeric protein cpar-1 from Caenorhabditis briggsae.